A 1262-amino-acid chain; its full sequence is MNANVTVDDAISNVNLLDTLAIPDDLPDIEARALPLLYRSNFDTNFEDRSAFVTGIAKYSEEATRHAQFNDMLSEGLQHAANMYTWRCCSRAVPMAKSNDQPNRTEINEMVVEVLKPEVSKLGSFMRFTLTAIQRFCEEVRRLCHSEKRRDFVSEAYLLTLGRFINMFAVLDELKNMKASIKNDFSTFRRASQFLTAMSDTQAVHDMQNLSMFLATQNKIKDDLKLQMKTIEGYEELLCDVVNICAHMYEHQLYLSPNEKHMFVKVIAFSLFLMDGDAANVAKLDQKKRLSISRLDKIFKTLEVVPLYGDMQIQPFAFVRRSSHYEPSKWPLSDKESDRCHVNIVEKVQSIRSDHESYVTQFAKINNEVAICDRPGNDSENREITSLALSGIQLLCQWSCAVVETISWKLLNPTNPKDNRECPENAEEYERATRYNYSPAEKTALIQIIAMIKGLQSMLGKTESDMSNSTRKCVYVELQAFIHHTINEPLQKAVKHKKDLLASILQSVKDSISDAGNELNRMTDVKGKKKSSAPKGDSANSSSSDIRIPRRTAAPGSTQLYMARTQLESLISDKLCGGKKILRKELDSKTIEKISVFLRKSAHWPALFRLSDSMTEAGELSQLWFREFYLEMTMGQRIQFPIEMSMPWILTDYILSCNEPSLIESALYQLDLYNDAAQYSLFNFNKQFLYDEVEAEVNLCFDQFVYKLSEMVFTHYKQLASCMLLDKRFKAEILRSGTMIRSPSAARFESLLQQRHVQLLGRSVDLNRVVSQRVNMALLKALDAAIWKFESEPLSSIVELDMLIDTNRLCHTLLSDVLHSIAPFDDLFQEANHAVNSPHGRITLHVFWELNYDFVPNFVYNGSTHRFVRARHVFRKTPAREKPPQVGQVYYWGSKSLMAAFMNICNAYSQCIGTQHLKAITRLLHYQGIAVILDELLKMTNRLLNDKIRRHVRNVFNMMPKVCKLPRSDYGSNALLQYYVHHLEAVGKYPELKSEFCQDLRELGNMIVFCQQLEVALGQEEAHDLFLAAAYTGTVPQPPARNAQEQMKQLAKLEDKYSRIHLTEIIDKISPDDGQAAIAKDAELMTKERLCCGLNAFENFLVRIKQMLAADDIWTGGYPTNGVFWIDECVEWYRVYSALQFFLCQPTRDDNEVYAEELFGDSLQWGGLTLITLLGQHRRFEVLDFCYHLHRVNKADGKDEVISGIRLAKMVERIRRFQLLNNQIFIILENQLNENNDDPNERVREFAPPVHPNYANHAARRQ.

The disordered stretch occupies residues 519-550 (LNRMTDVKGKKKSSAPKGDSANSSSSDIRIPR).

It belongs to the CYFIP family. In terms of assembly, interacts with gex-3.

The protein localises to the cytoplasm. Functionally, required for initial steps of body morphogenesis. May play a role in egg laying and yolk protein clatherin-mediated endocytosis by oocytes during oogenesis. Plays a role in the formation of muscle connections, also called muscle arm extensions, between the body wall and the motor axons in the dorsal and ventral cord. The protein is Cytoplasmic FMR1-interacting protein homolog of Caenorhabditis elegans.